Consider the following 191-residue polypeptide: Small ribosomal subunit protein uS5 (191 aa).

In terms of domain architecture, S5 DRBM spans 20 to 83 (FADRLVAINR…EQAKRQMIRV (64 aa)). Residues 158–191 (TSPRMVAQRRGKKVSDILKKDGEPAEAAAEPAEA) form a disordered region. The segment covering 170–180 (KVSDILKKDGE) has biased composition (basic and acidic residues). The segment covering 182 to 191 (AEAAAEPAEA) has biased composition (low complexity).

It belongs to the universal ribosomal protein uS5 family. Part of the 30S ribosomal subunit. Contacts proteins S4 and S8.

With S4 and S12 plays an important role in translational accuracy. Functionally, located at the back of the 30S subunit body where it stabilizes the conformation of the head with respect to the body. This chain is Small ribosomal subunit protein uS5, found in Dinoroseobacter shibae (strain DSM 16493 / NCIMB 14021 / DFL 12).